The following is a 297-amino-acid chain: Nucleotide-binding protein Bphy_0322 (297 aa).

Position 8-15 (8-15 (GISGSGKS)) interacts with ATP. 57–60 (DARS) provides a ligand contact to GTP.

The protein belongs to the RapZ-like family.

In terms of biological role, displays ATPase and GTPase activities. This Paraburkholderia phymatum (strain DSM 17167 / CIP 108236 / LMG 21445 / STM815) (Burkholderia phymatum) protein is Nucleotide-binding protein Bphy_0322.